A 354-amino-acid chain; its full sequence is MSPPALPSHHRAIVQANTDPVTFEISENRPVPVPLDDEILIKVSAVALNHCDYKMPGRVPCPGAVNGADYSGTVVRMGKKAELESGLRIGDHVAGAQVASSRRAPWAGAFAEYIRHHHSMVWKVPDGWSWEKAAAIGCATTSTVGMALWITLGLTGTPEEPAQEPEFVLVSGYRVVTTCSPKNFAMVESYGAEKAFDYHSSTCGEDIRAYTENRLQYVLDIITEARTIRQCYAAIGRGGGKYCGFELLPDDLLSTLRKSVKADWTMGLELTGNEVDLPGGYYRAANPEMHKWFVLWKQRYVALYDAGKLKPHPITVREGGLDKVIDGIETMRRREVSGEKIVYPLYNNSSKGVV.

The Enoyl reductase (ER) domain occupies 16 to 342; sequence ANTDPVTFEI…RREVSGEKIV (327 aa). NADP(+) is bound by residues 51–54, 180–183, Y198, 245–246, and 336–337; these read CDYK, SPKN, FE, and VS.

It belongs to the zinc-containing alcohol dehydrogenase family. Monomer.

It functions in the pathway mycotoxin biosynthesis. Functionally, trans-enoyl reductase; part of the gene cluster that mediates the biosynthesis of pyrrocidines, fungal natural products containing a macrocyclic para-cyclophane connected to a decahydrofluorene ring system that show potent antibiotic activities toward Gram-negative bacteria. Within the pathway, the PKS-NRPS pydA, with the help of the trans-enoyl reductase pydC, synthesize the polyketide-tyrosyl acyl thioester product which can be reductively off-loaded by the terminal reductase (R) domain in pydA. The PKS module of pydA acts in combination with the trans-acting enoyl reductase pydC to produce a methylated polyketide attached to the ACP domain. In parallel, the adenylation (A) domain of the NRPS module activated L-tyrosine, which is then transferred to the ACP domain. The condensation (C) domain subsequently link this group to the polyketide chain, forming an enzyme-bound amide. The alpha/beta hydrolase pydG is then required to catalyze the subsequent Knoevenagel condensation that affords the 3-pyrrolin-2-one ring, whereas the four proteins pydB, pydE, pydX and pydZ then function synergistically to form the cyclophane. PydB and the membrane-bound pydX and pydZ are lipid-binding proteins that can sequester and mold the pdyG product into the inverse S-shape. Binding of the medium chain reductase pydE to the complex would trigger the cascade oxidative cyclization. PydY is involved in the Diels-Alder cycloaddition that forms the decahydrofluorene core. Additional non-enzymatic hydroxylation yields pyrrocidine A2 which can be further reduced into pyrrocidine B by an endogenous reductase. In Acremonium sp, this protein is Trans-enoyl reductase pydC.